Reading from the N-terminus, the 872-residue chain is MSVTNLSWLKKKSQSVDITAPGFNPLAGAGKQMPQASKPPAPKTPIIEEEQNNAANSQKHPSRRSELKRFYTIDTGQKKTLDKKDGRRMSFQKPKGTVKYTVESRDSLNSIALKFDTTPNELVQLNKLFSRAVVTGQVLYVPDPEYVSSVESSPSLSPISPLSPTSSEAELEKTTTPDVVHPKEPTPSSAFTAVRPVRVVSSTSEEEEAFTEKFLKINCRYITSSKGTVSGVLLVTPNNIMFDPHKTDPLVQENGCEEYGIMCPMEEVMSAAMYKEILDSKIKESLPIEIDQLSGRDFCHLKKVTRSNTDELDSRIRDAANDSASTAPRSTEESLSEDVFTESELSPVREELISLDELRHDKSSGASSESVQTITQSGVECLAVISEAASTPDHLKSGSGHTANEVGTLSLKTGLNNLEMPTKEGDQAADNLQKISGLKEQSTGIKKDNQDFPLDENSLHQEEVEKESMPCGEAIELKQKQVVDKGKQGREQNQDSETEVEELRKLWKSHSMQQTKQQRETMQQVSQKEIKHKIATADIEGSALLKEKRRHRLHKFLCLRVRKPMRKTFVSQASATMQQYAQRDKKHEYWFAVPQERTDHLYAFFIQWSPETYAEDTGEYTKEPGFIVVKKIEESETNEDSTNEAAAREWEVVSVAEYHRRIDALNTEELRTLCRRLQITTREDINSKQSTPVKADLESESFRPNLSDPSHLLLPDQIIKLTKHLPPRTIGYPWTLVYGTRKHGTSLKTLYRTMTGLDTPVLMVIKDSDWQVFGAFASQPFKVSDGFYGNGETFVFTFCPEFEVFKWTGDNMFFIKGDMDSLAFGGGGGEFALWLDGDLYHGRSHSCKTFGNHTLSKKEDFCIQDIEIWAFK.

The segment at Met1–Gly86 is disordered. A compositionally biased stretch (basic and acidic residues) spans Arg63–Gly86. Ser90 is subject to Phosphoserine. The LysM domain occupies Val98–Val141. A Phosphothreonine modification is found at Thr118. Positions Val150–Glu168 are enriched in low complexity. The tract at residues Val150–Pro187 is disordered. Basic and acidic residues predominate over residues Glu170–Glu184. A phosphoserine mark is found at Ser201, Ser202, and Ser204. Residues Glu212–Val268 form the GRAM domain. Phosphoserine is present on residues Ser294, Ser334, and Ser336. Positions Ser314 to Asp338 are disordered. Thr341 carries the post-translational modification Phosphothreonine. Phosphoserine occurs at positions 346 and 496. The interval Arg549 to Thr576 is mediates oxidative antimutator activity. The 162-residue stretch at His711–Lys872 folds into the TLDc domain.

It belongs to the OXR1 family.

The protein localises to the mitochondrion. May be involved in protection from oxidative damage. In Bos taurus (Bovine), this protein is Oxidation resistance protein 1 (OXR1).